The following is a 49-amino-acid chain: Large ribosomal subunit protein bL33A (49 aa).

The protein belongs to the bacterial ribosomal protein bL33 family.

This is Large ribosomal subunit protein bL33A from Staphylococcus haemolyticus (strain JCSC1435).